The primary structure comprises 252 residues: UPF0246 protein AM1_4276 (252 aa).

This sequence belongs to the UPF0246 family.

This chain is UPF0246 protein AM1_4276, found in Acaryochloris marina (strain MBIC 11017).